Here is a 28-residue protein sequence, read N- to C-terminus: NU-theraphotoxin-Preg1a (28 aa).

Intrachain disulfides connect Cys-2-Cys-19, Cys-9-Cys-22, and Cys-18-Cys-27.

As to expression, expressed by the venom gland.

It localises to the secreted. In terms of biological role, toxin that acts as an agonist on melanocortin receptors (MC1R, MC3R, MC5R, MC5R). After binding to MC1R, the peptide activates the hMC1R/Gs pathway, but after binding to MC4R, it is not able to activate or antagonize the MC4R/Gs pathway. Inhibits melanocyte stimulating hormone (MSH)-binding to human receptors (Ki=1.8 uM to MC1R, Ki=19.8 uM to MC3R, Ki=7.1 uM to MC4R, Ki=10.0 uM to MC5R). This toxin is structurally unrelated to the natural agonists. The polypeptide is NU-theraphotoxin-Preg1a (Poecilotheria regalis (Indian ornamental tree spider)).